The following is a 279-amino-acid chain: Large ribosomal subunit protein uL3 (279 aa).

Q151 bears the N5-methylglutamine mark.

It belongs to the universal ribosomal protein uL3 family. Part of the 50S ribosomal subunit. Forms a cluster with proteins L14 and L19. Methylated by PrmB.

Functionally, one of the primary rRNA binding proteins, it binds directly near the 3'-end of the 23S rRNA, where it nucleates assembly of the 50S subunit. In Dinoroseobacter shibae (strain DSM 16493 / NCIMB 14021 / DFL 12), this protein is Large ribosomal subunit protein uL3.